The sequence spans 299 residues: Oxygen-dependent coproporphyrinogen-III oxidase (299 aa).

Residue S92 participates in substrate binding. A divalent metal cation is bound by residues H96 and H106. H106 (proton donor) is an active-site residue. 108–110 contacts substrate; that stretch reads NVR. Positions 145 and 175 each coordinate a divalent metal cation. Residues 240–275 form an important for dimerization region; sequence YVEFNLVWDRGTLFGLQTGGRTESILMSMPPLVRWE. 258–260 lines the substrate pocket; sequence GGR.

It belongs to the aerobic coproporphyrinogen-III oxidase family. Homodimer. It depends on a divalent metal cation as a cofactor.

Its subcellular location is the cytoplasm. It carries out the reaction coproporphyrinogen III + O2 + 2 H(+) = protoporphyrinogen IX + 2 CO2 + 2 H2O. It participates in porphyrin-containing compound metabolism; protoporphyrin-IX biosynthesis; protoporphyrinogen-IX from coproporphyrinogen-III (O2 route): step 1/1. Its function is as follows. Involved in the heme biosynthesis. Catalyzes the aerobic oxidative decarboxylation of propionate groups of rings A and B of coproporphyrinogen-III to yield the vinyl groups in protoporphyrinogen-IX. The sequence is that of Oxygen-dependent coproporphyrinogen-III oxidase from Shigella flexneri.